We begin with the raw amino-acid sequence, 68 residues long: uncharacterized protein (68 aa).

The 66-residue stretch at 2–67 (KTITLNIKGI…VIEDAGFDAT (66 aa)) folds into the HMA domain. A metal cation contacts are provided by cysteine 13 and cysteine 16.

This is an uncharacterized protein from Haemophilus influenzae (strain ATCC 51907 / DSM 11121 / KW20 / Rd).